The primary structure comprises 505 residues: Flagellin (505 aa).

This sequence belongs to the bacterial flagellin family.

The protein localises to the secreted. It localises to the bacterial flagellum. Functionally, flagellin is the subunit protein which polymerizes to form the filaments of bacterial flagella. The protein is Flagellin (fliC) of Salmonella muenchen.